The following is a 114-amino-acid chain: Iron-sulfur cluster insertion protein ErpA (114 aa).

Positions 42, 106, and 108 each coordinate iron-sulfur cluster.

It belongs to the HesB/IscA family. In terms of assembly, homodimer. Iron-sulfur cluster is required as a cofactor.

Functionally, required for insertion of 4Fe-4S clusters for at least IspG. This Hamiltonella defensa subsp. Acyrthosiphon pisum (strain 5AT) protein is Iron-sulfur cluster insertion protein ErpA.